The chain runs to 551 residues: Cytochrome P450 monooxygenase abl5 (551 aa).

Asn24 is a glycosylation site (N-linked (GlcNAc...) asparagine). Residues 37 to 57 form a helical membrane-spanning segment; sequence VVLNTLTAIVVVWICYRAVIY. N-linked (GlcNAc...) asparagine glycosylation is found at Asn174, Asn218, Asn283, Asn307, and Asn441. Residue Cys495 participates in heme binding.

It belongs to the cytochrome P450 family. Heme is required as a cofactor.

It is found in the membrane. Cytochrome P450 monooxygenase; part of the gene cluster that mediates the biosynthesis of abscisic acid (ABA), a phytohormone that acts antagonistically toward salicylic acid (SA), jasmonic acid (JA) and ethylene (ETH) signaling, to impede plant defense responses. The first step of the pathway catalyzes the reaction from farnesyl diphosphate to alpha-ionylideneethane performed by the alpha-ionylideneethane synthase abl3 via a three-step reaction mechanism involving 2 neutral intermediates, beta-farnesene and allofarnesene. The cytochrome P450 monooxygenase abl1 might then be involved in the conversion of alpha-ionylideneethane to alpha-ionylideneacetic acid. Alpha-ionylideneacetic acid is further converted to abscisic acid in 2 steps involving the cytochrome P450 monooxygenase abl2 and the short-chain dehydrogenase/reductase abl4, via the intermediates 1'-deoxy-ABA or 1',4'-trans-diol-ABA, depending on the order of action of these 2 enzymes. Abl2 is responsible for the hydroxylation of carbon atom C-1' and abl4 might be involved in the oxidation of the C-4' carbon atom. The cytochrome monooxygenase abl5 seems not essential for the biosynthesis of ABA and its function remains to be identified. The sequence is that of Cytochrome P450 monooxygenase abl5 from Leptosphaeria maculans (strain JN3 / isolate v23.1.3 / race Av1-4-5-6-7-8) (Blackleg fungus).